The following is a 319-amino-acid chain: MSLNFLDFEQPIAELEAKIDSLTAVSRQDEKLDINLDEEVQRLREKSVELTRKIFSDLGAWQIAQLARHPRRPYTLDYIANIFTDFEELAGDRAYADDKAIVGGIARLDGRPVMIIGHQKGRETKEKIRRNFGMPAPEGYRKALRLMEMAERFKLPIITFIDTPGAYPGVGAEERGQSEAIARNLREMSRLNVPIVCTVIGEGGSGGALAIGVGDKVNMLQYSTYSVISPEGCASILWKSADKAPLAAEAMGITAHRLKELKMIDSVIPEPLGGAHRDYAAIAISLKAQLLADLNDLDVLNDEELLNRRYQRLMNYGYC.

The CoA carboxyltransferase C-terminal domain maps to N35–D296.

It belongs to the AccA family. As to quaternary structure, acetyl-CoA carboxylase is a heterohexamer composed of biotin carboxyl carrier protein (AccB), biotin carboxylase (AccC) and two subunits each of ACCase subunit alpha (AccA) and ACCase subunit beta (AccD).

The protein resides in the cytoplasm. It carries out the reaction N(6)-carboxybiotinyl-L-lysyl-[protein] + acetyl-CoA = N(6)-biotinyl-L-lysyl-[protein] + malonyl-CoA. It functions in the pathway lipid metabolism; malonyl-CoA biosynthesis; malonyl-CoA from acetyl-CoA: step 1/1. Component of the acetyl coenzyme A carboxylase (ACC) complex. First, biotin carboxylase catalyzes the carboxylation of biotin on its carrier protein (BCCP) and then the CO(2) group is transferred by the carboxyltransferase to acetyl-CoA to form malonyl-CoA. The protein is Acetyl-coenzyme A carboxylase carboxyl transferase subunit alpha of Yersinia pseudotuberculosis serotype O:3 (strain YPIII).